A 309-amino-acid chain; its full sequence is Fe-S cluster assembly protein dre2 (309 aa).

The N-terminal SAM-like domain stretch occupies residues 1–132 (MTTTIVLASP…LRRPAQVEAV (132 aa)). The tract at residues 133–195 (PLKLSTKKSA…DALVSDEETQ (63 aa)) is linker. Cysteine 207, cysteine 216, cysteine 219, and cysteine 221 together coordinate [2Fe-2S] cluster. The tract at residues 207–221 (CSKPGKKKRCKNCTC) is fe-S binding site A. [4Fe-4S] cluster is bound by residues cysteine 265, cysteine 268, cysteine 276, and cysteine 279. 2 short sequence motifs (cx2C motif) span residues 265–268 (CGSC) and 276–279 (CSGC). The segment at 265-279 (CGSCYLGDAFRCSGC) is fe-S binding site B.

This sequence belongs to the anamorsin family. Monomer. Interacts with TAH18. Interacts with MIA40. [2Fe-2S] cluster is required as a cofactor. [4Fe-4S] cluster serves as cofactor.

Its subcellular location is the cytoplasm. It is found in the mitochondrion intermembrane space. Component of the cytosolic iron-sulfur (Fe-S) protein assembly (CIA) machinery required for the maturation of extramitochondrial Fe-S proteins. Part of an electron transfer chain functioning in an early step of cytosolic Fe-S biogenesis, facilitating the de novo assembly of a [4Fe-4S] cluster on the scaffold complex CFD1-NBP35. Electrons are transferred to DRE2 from NADPH via the FAD- and FMN-containing protein TAH18. TAH18-DRE2 are also required for the assembly of the diferric tyrosyl radical cofactor of ribonucleotide reductase (RNR), probably by providing electrons for reduction during radical cofactor maturation in the catalytic small subunit RNR2. This Schizosaccharomyces japonicus (strain yFS275 / FY16936) (Fission yeast) protein is Fe-S cluster assembly protein dre2.